We begin with the raw amino-acid sequence, 843 residues long: Protein P (843 aa).

Residues 1–177 (MPLSYQHFRK…FCGSPYSWEQ (177 aa)) are terminal protein domain (TP). The segment at 178-346 (ELQHGRLVFQ…YCLSHIVNLL (169 aa)) is spacer. Disordered regions lie at residues 218–243 (LKQSRLGLQPQQGSLARGKSGRSGSI) and 290–316 (STSKRQSSSGHAVELHNIPPSSARSQS). Residues 290–299 (STSKRQSSSG) are compositionally biased toward polar residues. Residues 347–690 (EDWGPCTEHG…YLHLYPVARQ (344 aa)) form a polymerase/reverse transcriptase domain (RT) region. The Reverse transcriptase domain occupies 357–600 (EHNIRIPRTP…YSLNFMGYVI (244 aa)). Mg(2+) is bound by residues Asp429, Asp551, and Asp552.

This sequence belongs to the hepadnaviridae P protein family.

It catalyses the reaction DNA(n) + a 2'-deoxyribonucleoside 5'-triphosphate = DNA(n+1) + diphosphate. The catalysed reaction is Endonucleolytic cleavage to 5'-phosphomonoester.. Its activity is regulated as follows. Activated by host HSP70 and HSP40 in vitro to be able to bind the epsilon loop of the pgRNA. Because deletion of the RNase H region renders the protein partly chaperone-independent, the chaperones may be needed indirectly to relieve occlusion of the RNA-binding site by this domain. Inhibited by several reverse-transcriptase inhibitors: Lamivudine, Adefovir and Entecavir. In terms of biological role, multifunctional enzyme that converts the viral RNA genome into dsDNA in viral cytoplasmic capsids. This enzyme displays a DNA polymerase activity that can copy either DNA or RNA templates, and a ribonuclease H (RNase H) activity that cleaves the RNA strand of RNA-DNA heteroduplexes in a partially processive 3'- to 5'-endonucleasic mode. Neo-synthesized pregenomic RNA (pgRNA) are encapsidated together with the P protein, and reverse-transcribed inside the nucleocapsid. Initiation of reverse-transcription occurs first by binding the epsilon loop on the pgRNA genome, and is initiated by protein priming, thereby the 5'-end of (-)DNA is covalently linked to P protein. Partial (+)DNA is synthesized from the (-)DNA template and generates the relaxed circular DNA (RC-DNA) genome. After budding and infection, the RC-DNA migrates in the nucleus, and is converted into a plasmid-like covalently closed circular DNA (cccDNA). The activity of P protein does not seem to be necessary for cccDNA generation, and is presumably released from (+)DNA by host nuclear DNA repair machinery. In Homo sapiens (Human), this protein is Protein P.